An 873-amino-acid chain; its full sequence is Bifunctional uridylyltransferase/uridylyl-removing enzyme (873 aa).

The tract at residues 1 to 332 (MAFQSPLTFN…NGGETEPAVI (332 aa)) is uridylyltransferase. Positions 333–692 (INEDFQRRGR…MSKKATRGGT (360 aa)) are uridylyl-removing. Positions 451 to 573 (VDEHSVRLLN…VRDEERLEYL (123 aa)) constitute an HD domain. 2 ACT domains span residues 693 to 773 (EVFV…VKTR) and 800 to 873 (LMEL…ELAP).

The protein belongs to the GlnD family. The cofactor is Mg(2+).

It carries out the reaction [protein-PII]-L-tyrosine + UTP = [protein-PII]-uridylyl-L-tyrosine + diphosphate. The enzyme catalyses [protein-PII]-uridylyl-L-tyrosine + H2O = [protein-PII]-L-tyrosine + UMP + H(+). Its activity is regulated as follows. Uridylyltransferase (UTase) activity is inhibited by glutamine, while glutamine activates uridylyl-removing (UR) activity. Its function is as follows. Modifies, by uridylylation and deuridylylation, the PII regulatory proteins (GlnB and homologs), in response to the nitrogen status of the cell that GlnD senses through the glutamine level. Under low glutamine levels, catalyzes the conversion of the PII proteins and UTP to PII-UMP and PPi, while under higher glutamine levels, GlnD hydrolyzes PII-UMP to PII and UMP (deuridylylation). Thus, controls uridylylation state and activity of the PII proteins, and plays an important role in the regulation of nitrogen assimilation and metabolism. This Vibrio vulnificus (strain YJ016) protein is Bifunctional uridylyltransferase/uridylyl-removing enzyme.